The sequence spans 133 residues: Small ribosomal subunit protein uS8 (133 aa).

Belongs to the universal ribosomal protein uS8 family. In terms of assembly, part of the 30S ribosomal subunit.

Functionally, one of the primary rRNA binding proteins, it binds directly to 16S rRNA central domain where it helps coordinate assembly of the platform of the 30S subunit. This chain is Small ribosomal subunit protein uS8, found in Desulfurococcus amylolyticus (strain DSM 18924 / JCM 16383 / VKM B-2413 / 1221n) (Desulfurococcus kamchatkensis).